A 308-amino-acid chain; its full sequence is Aspartate carbamoyltransferase catalytic subunit (308 aa).

Residues R57 and T58 each contribute to the carbamoyl phosphate site. L-aspartate is bound at residue K86. The carbamoyl phosphate site is built by R107, H135, and Q138. Positions 167 and 228 each coordinate L-aspartate. 2 residues coordinate carbamoyl phosphate: L267 and P268.

This sequence belongs to the aspartate/ornithine carbamoyltransferase superfamily. ATCase family. Heterooligomer of catalytic and regulatory chains.

It carries out the reaction carbamoyl phosphate + L-aspartate = N-carbamoyl-L-aspartate + phosphate + H(+). It participates in pyrimidine metabolism; UMP biosynthesis via de novo pathway; (S)-dihydroorotate from bicarbonate: step 2/3. In terms of biological role, catalyzes the condensation of carbamoyl phosphate and aspartate to form carbamoyl aspartate and inorganic phosphate, the committed step in the de novo pyrimidine nucleotide biosynthesis pathway. In Methanosarcina barkeri (strain Fusaro / DSM 804), this protein is Aspartate carbamoyltransferase catalytic subunit.